A 35-amino-acid polypeptide reads, in one-letter code: Photosystem II reaction center protein T (35 aa).

Residues 3–23 (ALVYTFLLVSTLGIIFFAIFF) form a helical membrane-spanning segment.

It belongs to the PsbT family. As to quaternary structure, PSII is composed of 1 copy each of membrane proteins PsbA, PsbB, PsbC, PsbD, PsbE, PsbF, PsbH, PsbI, PsbJ, PsbK, PsbL, PsbM, PsbT, PsbY, PsbZ, Psb30/Ycf12, at least 3 peripheral proteins of the oxygen-evolving complex and a large number of cofactors. It forms dimeric complexes.

It is found in the plastid. Its subcellular location is the chloroplast thylakoid membrane. Found at the monomer-monomer interface of the photosystem II (PS II) dimer, plays a role in assembly and dimerization of PSII. PSII is a light-driven water plastoquinone oxidoreductase, using light energy to abstract electrons from H(2)O, generating a proton gradient subsequently used for ATP formation. The polypeptide is Photosystem II reaction center protein T (Cabomba caroliniana (Carolina fanwort)).